The sequence spans 281 residues: NAD kinase (281 aa).

The Proton acceptor role is filled by aspartate 61. NAD(+) is bound by residues 61–62, 134–135, arginine 145, aspartate 164, 175–180, and glutamine 234; these read DG, ND, and TAYSLS.

Belongs to the NAD kinase family. The cofactor is a divalent metal cation.

It is found in the cytoplasm. It catalyses the reaction NAD(+) + ATP = ADP + NADP(+) + H(+). Involved in the regulation of the intracellular balance of NAD and NADP, and is a key enzyme in the biosynthesis of NADP. Catalyzes specifically the phosphorylation on 2'-hydroxyl of the adenosine moiety of NAD to yield NADP. The chain is NAD kinase from Clostridium botulinum (strain 657 / Type Ba4).